A 65-amino-acid chain; its full sequence is Large ribosomal subunit protein bL35 (65 aa).

Residues 1–15 (MPKMKTKKSASKRFT) are compositionally biased toward basic residues. The interval 1–27 (MPKMKTKKSASKRFTARPNGSFKRGQA) is disordered.

It belongs to the bacterial ribosomal protein bL35 family.

In Cupriavidus pinatubonensis (strain JMP 134 / LMG 1197) (Cupriavidus necator (strain JMP 134)), this protein is Large ribosomal subunit protein bL35.